A 236-amino-acid polypeptide reads, in one-letter code: MKQMDAHQIISFIQNSKKATPVKVYLKGDLEKITFPVDVKTFITGNAGTIFGEWAIVEPLLEANKANIEDYVIENDRRNSAIPLLDMKNINARIEPGAVIRDQVTIGDNAVIMMGASINIGAVIGDGTMIDMNVVLGGRATVGKNCHIGAGSVLAGVVEPPSAQPVIVEDNVVIGANVVVLEGVRIGEGAVVAAGAIVTKDVAPGTVVAGIPARELKKLDAKTASKTEIMQELRQL.

The protein belongs to the transferase hexapeptide repeat family. DapH subfamily.

The catalysed reaction is (S)-2,3,4,5-tetrahydrodipicolinate + acetyl-CoA + H2O = L-2-acetamido-6-oxoheptanedioate + CoA. It functions in the pathway amino-acid biosynthesis; L-lysine biosynthesis via DAP pathway; LL-2,6-diaminopimelate from (S)-tetrahydrodipicolinate (acetylase route): step 1/3. Catalyzes the transfer of an acetyl group from acetyl-CoA to tetrahydrodipicolinate. This is 2,3,4,5-tetrahydropyridine-2,6-dicarboxylate N-acetyltransferase from Listeria ivanovii.